The following is a 367-amino-acid chain: tRNA/tmRNA (uracil-C(5))-methyltransferase (367 aa).

S-adenosyl-L-methionine-binding residues include Gln-190, Tyr-218, Asn-223, Glu-239, and Asp-299. Cys-324 acts as the Nucleophile in catalysis. Glu-358 serves as the catalytic Proton acceptor.

Belongs to the class I-like SAM-binding methyltransferase superfamily. RNA M5U methyltransferase family. TrmA subfamily.

It carries out the reaction uridine(54) in tRNA + S-adenosyl-L-methionine = 5-methyluridine(54) in tRNA + S-adenosyl-L-homocysteine + H(+). The enzyme catalyses uridine(341) in tmRNA + S-adenosyl-L-methionine = 5-methyluridine(341) in tmRNA + S-adenosyl-L-homocysteine + H(+). In terms of biological role, dual-specificity methyltransferase that catalyzes the formation of 5-methyluridine at position 54 (m5U54) in all tRNAs, and that of position 341 (m5U341) in tmRNA (transfer-mRNA). This chain is tRNA/tmRNA (uracil-C(5))-methyltransferase, found in Musicola paradisiaca (strain Ech703) (Dickeya paradisiaca).